The chain runs to 286 residues: Bifunctional protein FolD (286 aa).

NADP(+) is bound by residues 165–167 (GRS) and S190.

The protein belongs to the tetrahydrofolate dehydrogenase/cyclohydrolase family. In terms of assembly, homodimer.

It carries out the reaction (6R)-5,10-methylene-5,6,7,8-tetrahydrofolate + NADP(+) = (6R)-5,10-methenyltetrahydrofolate + NADPH. The enzyme catalyses (6R)-5,10-methenyltetrahydrofolate + H2O = (6R)-10-formyltetrahydrofolate + H(+). It functions in the pathway one-carbon metabolism; tetrahydrofolate interconversion. Functionally, catalyzes the oxidation of 5,10-methylenetetrahydrofolate to 5,10-methenyltetrahydrofolate and then the hydrolysis of 5,10-methenyltetrahydrofolate to 10-formyltetrahydrofolate. This chain is Bifunctional protein FolD, found in Paraburkholderia xenovorans (strain LB400).